We begin with the raw amino-acid sequence, 97 residues long: Antitoxin TacA2 (97 aa).

Belongs to the TacA antitoxin family. As to quaternary structure, homodimer. Forms a complex with cognate toxin TacT2.

Its function is as follows. Antitoxin component of a type II toxin-antitoxin (TA) system. Counteracts the toxic effect of cognate toxin TacT2. In terms of biological role, the TacA2-TacT2 complex both represses and derepresses expression of its own operon. The polypeptide is Antitoxin TacA2 (Salmonella enteritidis).